We begin with the raw amino-acid sequence, 861 residues long: Xylan 1,4-beta-xylosidase (861 aa).

Positions 1–19 are cleaved as a signal peptide; the sequence is MKYQLFLSLALCVGLGASA. Residue aspartate 269 is the Nucleophile of the active site. Positions 458-600 constitute a PA14 domain; that stretch reads DGKKGLKGTF…DYQETIAQLK (143 aa). Residue glutamate 616 is the Proton donor/acceptor of the active site.

The protein belongs to the glycosyl hydrolase 3 family. As to quaternary structure, exists as a large polymeric species, presumably as a homononamer.

The catalysed reaction is Hydrolysis of (1-&gt;4)-beta-D-xylans, to remove successive D-xylose residues from the non-reducing termini.. It catalyses the reaction Hydrolysis of terminal non-reducing alpha-L-arabinofuranoside residues in alpha-L-arabinosides.. The protein operates within glycan degradation; xylan degradation. Functionally, involved in degradation of plant cell wall polysaccharides. Has beta-xylosidase activity via its capacity to hydrolyze glycosidic linkages of beta-1,4-xylo-oligosaccharides of various lengths (X2 to X6), releasing xylose monomers. To a much lesser extent, also has alpha-L-arabinofuranosidase activity. Does not possess beta-D-glucosidase activity. Acts synergistically with Xyn10D-Fae1A to increase the release of xylose from xylan. The protein is Xylan 1,4-beta-xylosidase of Xylanibacter ruminicola (strain ATCC 19189 / DSM 19721 / CIP 105475 / JCM 8958 / 23) (Prevotella ruminicola).